Consider the following 107-residue polypeptide: Parvalbumin beta 2 (107 aa).

Ser1 carries the N-acetylserine modification. 2 consecutive EF-hand domains span residues 37–72 (XSPDDLKKXXXXLDQDKSGFLEEDELKLFLQNFSAS) and 89–107 (DADGDGMLGLDEFAVLVKQ). Residues Asp50, Asp52, Ser54, Phe56, Glu58, Glu61, Asp89, Asp91, Asp93, Met95, and Glu100 each contribute to the Ca(2+) site.

The protein belongs to the parvalbumin family.

In muscle, parvalbumin is thought to be involved in relaxation after contraction. It binds two calcium ions. This is Parvalbumin beta 2 from Oncorhynchus mykiss (Rainbow trout).